A 334-amino-acid polypeptide reads, in one-letter code: MGVTGISTFPCCGKDSVDIVERQSDHHRHHHHHTHEENEDEDTEVEAELPRTEPPPKVDPELGPVPQLEEMEPELPSKTTPETEGDSYTESPEQQNYRMESLKPYEEEEMGGRYRSIPVQTSKHLFWSNKLIQASEHSLQKALEKHHRSPQEKSISISQVYTECTQPPSSPPVSRPTTPTAIGLADLINFASSLAVASSSNMALPNLENMIKGTSEKSQNTSLDFCQPVQAIKFAQATQITQISSEKQDESPKSMAHKSWTRETRNVACSYLDINQAGLKTATIQGEVKFVQTPIASPQLQEAKEDSVPGTKKGNPLLLKIHFKLSSPQPQRND.

Residues serine 24–arginine 98 form a disordered region. The span at glutamate 37–alanine 47 shows a compositional bias: acidic residues. The span at glutamate 48 to proline 60 shows a compositional bias: basic and acidic residues. A compositionally biased stretch (polar residues) spans serine 77 to arginine 98. Residues serine 135 and serine 138 each carry the phosphoserine modification.

In terms of assembly, interacts with syntaxin-1 and ACTB. In terms of tissue distribution, highly expressed in the testis and weakly in the brain and heart.

In Mus musculus (Mouse), this protein is Spermatogenesis-associated protein 32 (Spata32).